The primary structure comprises 398 residues: tRNA-specific 2-thiouridylase MnmA (398 aa).

ATP contacts are provided by residues 18–25 (AMSGGVDS) and leucine 44. Cysteine 112 (nucleophile) is an active-site residue. The cysteines at positions 112 and 213 are disulfide-linked. Glycine 136 is an ATP binding site. Positions 163–165 (RDQ) are interaction with tRNA. Cysteine 213 acts as the Cysteine persulfide intermediate in catalysis.

It belongs to the MnmA/TRMU family.

It localises to the cytoplasm. The catalysed reaction is S-sulfanyl-L-cysteinyl-[protein] + uridine(34) in tRNA + AH2 + ATP = 2-thiouridine(34) in tRNA + L-cysteinyl-[protein] + A + AMP + diphosphate + H(+). Its function is as follows. Catalyzes the 2-thiolation of uridine at the wobble position (U34) of tRNA, leading to the formation of s(2)U34. The protein is tRNA-specific 2-thiouridylase MnmA of Agrobacterium fabrum (strain C58 / ATCC 33970) (Agrobacterium tumefaciens (strain C58)).